A 299-amino-acid polypeptide reads, in one-letter code: Telomere repeat-binding factor 2 (299 aa).

Residues 1–61 (MGAPKQKWTP…KWRNISVTAL (61 aa)) enclose the HTH myb-type domain. The H-T-H motif DNA-binding region spans 28–57 (WRTILSDTEFSLILKSRSNVDLKDKWRNIS). Residues 93–116 (LTNDDERAKPTSPGGSGGGSPRTC) form a disordered region. In terms of domain architecture, H15 spans 121–189 (SITSLDKIIF…KIKHKYRFSS (69 aa)). Residues 243 to 288 (EAAEAAARAVAEAEFAITEAEQAAKEAERAEAEAEAAQIFAKAAMK) adopt a coiled-coil conformation.

The protein belongs to the histone H1/H5 family. SMH subfamily. In terms of assembly, forms a homodimer and heterodimers with TRB1 or TRB3. Interacts with TRB1 and TRB3. Ubiquitous.

The protein resides in the nucleus. The protein localises to the nucleolus. Its subcellular location is the chromosome. Binds preferentially double-stranded telomeric repeats, but it can also bind to the single G-rich telomeric strand. The protein is Telomere repeat-binding factor 2 (TRB2) of Arabidopsis thaliana (Mouse-ear cress).